The sequence spans 159 residues: Ribosomal RNA large subunit methyltransferase H (159 aa).

Residues L76, G108, and 127–132 contribute to the S-adenosyl-L-methionine site; that span reads FSKMTF.

The protein belongs to the RNA methyltransferase RlmH family. In terms of assembly, homodimer.

It localises to the cytoplasm. It carries out the reaction pseudouridine(1915) in 23S rRNA + S-adenosyl-L-methionine = N(3)-methylpseudouridine(1915) in 23S rRNA + S-adenosyl-L-homocysteine + H(+). In terms of biological role, specifically methylates the pseudouridine at position 1915 (m3Psi1915) in 23S rRNA. The protein is Ribosomal RNA large subunit methyltransferase H of Staphylococcus saprophyticus subsp. saprophyticus (strain ATCC 15305 / DSM 20229 / NCIMB 8711 / NCTC 7292 / S-41).